The sequence spans 295 residues: ATP synthase gamma chain (295 aa).

The protein belongs to the ATPase gamma chain family. F-type ATPases have 2 components, CF(1) - the catalytic core - and CF(0) - the membrane proton channel. CF(1) has five subunits: alpha(3), beta(3), gamma(1), delta(1), epsilon(1). CF(0) has three main subunits: a, b and c.

The protein localises to the cell inner membrane. Its function is as follows. Produces ATP from ADP in the presence of a proton gradient across the membrane. The gamma chain is believed to be important in regulating ATPase activity and the flow of protons through the CF(0) complex. This is ATP synthase gamma chain from Cytophaga hutchinsonii (strain ATCC 33406 / DSM 1761 / CIP 103989 / NBRC 15051 / NCIMB 9469 / D465).